A 593-amino-acid polypeptide reads, in one-letter code: Copine-5 (593 aa).

In terms of domain architecture, C2 1 spans 2 to 134; sequence EQPEDMASLS…SPGSRLEKPL (133 aa). Ser-19 carries the post-translational modification Phosphoserine. Ca(2+)-binding residues include Asp-38, Asp-44, Asp-98, Asp-100, Ser-103, Lys-108, and Asp-110. Position 103 is a phosphoserine (Ser-103). The residue at position 140 (Ser-140) is a Phosphoserine. Residues 161–284 enclose the C2 2 domain; it reads KCGTIILSAE…ARGQSQFNIY (124 aa). Positions 192, 198, 254, 256, and 262 each coordinate Ca(2+). Residues 328 to 554 enclose the VWFA domain; that stretch reads NFTVAIDFTA…DVLAEIPDQL (227 aa). Residues 562-593 form a disordered region; the sequence is GIRPRPPPAAPTHSPSQSPARTPPASPLHTHI. The span at 572–581 shows a compositional bias: low complexity; it reads PTHSPSQSPA.

This sequence belongs to the copine family. Requires Ca(2+) as cofactor. As to expression, expressed in the brain, heart, stomach, spleen, lymph node and testis. Expressed in melanocytes.

The protein resides in the perikaryon. Its subcellular location is the cell projection. Probable calcium-dependent phospholipid-binding protein that may play a role in calcium-mediated intracellular processes. Plays a role in dendrite formation by melanocytes. This is Copine-5 from Homo sapiens (Human).